The chain runs to 492 residues: Bifunctional protein GlmU (492 aa).

Residues methionine 1 to arginine 241 are pyrophosphorylase. UDP-N-acetyl-alpha-D-glucosamine-binding positions include leucine 12–glycine 15, lysine 26, glutamine 83, and glycine 88–threonine 89. A Mg(2+)-binding site is contributed by aspartate 114. UDP-N-acetyl-alpha-D-glucosamine is bound by residues glycine 151, glutamate 166, asparagine 181, and asparagine 239. Asparagine 239 serves as a coordination point for Mg(2+). The interval valine 242–alanine 262 is linker. The N-acetyltransferase stretch occupies residues glycine 263–proline 492. UDP-N-acetyl-alpha-D-glucosamine contacts are provided by arginine 344 and lysine 362. The Proton acceptor role is filled by histidine 374. UDP-N-acetyl-alpha-D-glucosamine-binding residues include tyrosine 377 and asparagine 388. Acetyl-CoA contacts are provided by residues alanine 391, asparagine 397 to tyrosine 398, and alanine 434. Residues glycine 451–proline 492 form a disordered region. Over residues threonine 483 to proline 492 the composition is skewed to pro residues.

The protein in the N-terminal section; belongs to the N-acetylglucosamine-1-phosphate uridyltransferase family. It in the C-terminal section; belongs to the transferase hexapeptide repeat family. In terms of assembly, homotrimer. The cofactor is Mg(2+).

It localises to the cytoplasm. It carries out the reaction alpha-D-glucosamine 1-phosphate + acetyl-CoA = N-acetyl-alpha-D-glucosamine 1-phosphate + CoA + H(+). The catalysed reaction is N-acetyl-alpha-D-glucosamine 1-phosphate + UTP + H(+) = UDP-N-acetyl-alpha-D-glucosamine + diphosphate. It participates in nucleotide-sugar biosynthesis; UDP-N-acetyl-alpha-D-glucosamine biosynthesis; N-acetyl-alpha-D-glucosamine 1-phosphate from alpha-D-glucosamine 6-phosphate (route II): step 2/2. Its pathway is nucleotide-sugar biosynthesis; UDP-N-acetyl-alpha-D-glucosamine biosynthesis; UDP-N-acetyl-alpha-D-glucosamine from N-acetyl-alpha-D-glucosamine 1-phosphate: step 1/1. It functions in the pathway bacterial outer membrane biogenesis; LPS lipid A biosynthesis. Its function is as follows. Catalyzes the last two sequential reactions in the de novo biosynthetic pathway for UDP-N-acetylglucosamine (UDP-GlcNAc). The C-terminal domain catalyzes the transfer of acetyl group from acetyl coenzyme A to glucosamine-1-phosphate (GlcN-1-P) to produce N-acetylglucosamine-1-phosphate (GlcNAc-1-P), which is converted into UDP-GlcNAc by the transfer of uridine 5-monophosphate (from uridine 5-triphosphate), a reaction catalyzed by the N-terminal domain. The chain is Bifunctional protein GlmU from Mycobacterium marinum (strain ATCC BAA-535 / M).